Consider the following 268-residue polypeptide: Undecaprenyl-diphosphatase (268 aa).

8 consecutive transmembrane segments (helical) span residues 11–33, 46–66, 84–104, 107–127, 144–164, 185–205, 213–233, and 246–266; these read FLGL…LLLI, FEVL…SAKL, LGVL…HGFI, VLFE…FILL, YPLP…IPGV, AEFS…YDLF, FNDG…GVFV, and FALF…ALII.

Belongs to the UppP family.

It localises to the cell inner membrane. The enzyme catalyses di-trans,octa-cis-undecaprenyl diphosphate + H2O = di-trans,octa-cis-undecaprenyl phosphate + phosphate + H(+). Functionally, catalyzes the dephosphorylation of undecaprenyl diphosphate (UPP). Confers resistance to bacitracin. This chain is Undecaprenyl-diphosphatase, found in Brucella suis (strain ATCC 23445 / NCTC 10510).